A 265-amino-acid polypeptide reads, in one-letter code: 1-(5-phosphoribosyl)-5-[(5-phosphoribosylamino)methylideneamino] imidazole-4-carboxamide isomerase (265 aa).

The active-site Proton acceptor is the D8. Residue D139 is the Proton donor of the active site.

The protein belongs to the HisA/HisF family.

It is found in the cytoplasm. The catalysed reaction is 1-(5-phospho-beta-D-ribosyl)-5-[(5-phospho-beta-D-ribosylamino)methylideneamino]imidazole-4-carboxamide = 5-[(5-phospho-1-deoxy-D-ribulos-1-ylimino)methylamino]-1-(5-phospho-beta-D-ribosyl)imidazole-4-carboxamide. It functions in the pathway amino-acid biosynthesis; L-histidine biosynthesis; L-histidine from 5-phospho-alpha-D-ribose 1-diphosphate: step 4/9. This chain is 1-(5-phosphoribosyl)-5-[(5-phosphoribosylamino)methylideneamino] imidazole-4-carboxamide isomerase, found in Herminiimonas arsenicoxydans.